The following is a 306-amino-acid chain: Palmitoyl-protein thioesterase 1 (306 aa).

The first 27 residues, 1–27, serve as a signal peptide directing secretion; the sequence is MASPGCLWLLAVALLPWTCASRALQHL. Cysteine 6 is lipidated: S-palmitoyl cysteine; by ZDHHC3 and ZDHHC7. 3 disulfides stabilise this stretch: cysteine 45-cysteine 46, cysteine 96-cysteine 128, and cysteine 152-cysteine 160. Residue serine 115 is part of the active site. N-linked (GlcNAc...) asparagine glycans are attached at residues asparagine 197, asparagine 212, and asparagine 232. Residues aspartate 233 and histidine 289 contribute to the active site.

The protein belongs to the palmitoyl-protein thioesterase family. As to quaternary structure, interacts with CLN5. Interacts with ATP5F1A and ATP5F1B. In terms of processing, glycosylated.

Its subcellular location is the lysosome. The protein resides in the secreted. It localises to the golgi apparatus. It is found in the endoplasmic reticulum. The enzyme catalyses S-hexadecanoyl-L-cysteinyl-[protein] + H2O = L-cysteinyl-[protein] + hexadecanoate + H(+). It catalyses the reaction hexadecanoyl-CoA + H2O = hexadecanoate + CoA + H(+). The catalysed reaction is S-hexadecanoyl-N-acetylcysteamine + H2O = N-acetylcysteamine + hexadecanoate + H(+). It carries out the reaction S-hexadecanoyl-N-acetylcysteine methyl ester + H2O = N-acetylcysteine methyl ester + hexadecanoate + H(+). Palmitoylation reduces PPT1 enzymatic activity. In terms of biological role, has thioesterase activity against fatty acid thioesters with 14 -18 carbons, including palmitoyl-CoA, S-palmitoyl-N-acetylcysteamine, and palmitoylated proteins. In contrast to PPT2, PPT1 can hydrolyze palmitoylated proteins and palmitoylcysteine. The polypeptide is Palmitoyl-protein thioesterase 1 (PPT1) (Homo sapiens (Human)).